The chain runs to 374 residues: Deoxyguanosinetriphosphate triphosphohydrolase-like protein (374 aa).

In terms of domain architecture, HD spans 65 to 196 (RLTHSLEVAQ…ANLADEIAYN (132 aa)).

This sequence belongs to the dGTPase family. Type 2 subfamily.

This Nitrosomonas europaea (strain ATCC 19718 / CIP 103999 / KCTC 2705 / NBRC 14298) protein is Deoxyguanosinetriphosphate triphosphohydrolase-like protein (dgt).